Here is a 207-residue protein sequence, read N- to C-terminus: Cytochrome c biogenesis ATP-binding export protein CcmA (207 aa).

In terms of domain architecture, ABC transporter spans 2–204 (LECENLSCTR…TTIDIRNFNR (203 aa)). 34-41 (GPNGSGKT) contributes to the ATP binding site.

The protein belongs to the ABC transporter superfamily. CcmA exporter (TC 3.A.1.107) family. The complex is composed of two ATP-binding proteins (CcmA) and two transmembrane proteins (CcmB).

The protein localises to the cell membrane. It carries out the reaction heme b(in) + ATP + H2O = heme b(out) + ADP + phosphate + H(+). Part of the ABC transporter complex CcmAB involved in the biogenesis of c-type cytochromes; once thought to export heme, this seems not to be the case, but its exact role is uncertain. Responsible for energy coupling to the transport system. The polypeptide is Cytochrome c biogenesis ATP-binding export protein CcmA (Wolbachia pipientis wMel).